We begin with the raw amino-acid sequence, 372 residues long: Transaldolase (372 aa).

Catalysis depends on K140, which acts as the Schiff-base intermediate with substrate.

The protein belongs to the transaldolase family. Type 2 subfamily.

It localises to the cytoplasm. The catalysed reaction is D-sedoheptulose 7-phosphate + D-glyceraldehyde 3-phosphate = D-erythrose 4-phosphate + beta-D-fructose 6-phosphate. Its pathway is carbohydrate degradation; pentose phosphate pathway; D-glyceraldehyde 3-phosphate and beta-D-fructose 6-phosphate from D-ribose 5-phosphate and D-xylulose 5-phosphate (non-oxidative stage): step 2/3. In terms of biological role, transaldolase is important for the balance of metabolites in the pentose-phosphate pathway. This Acidothermus cellulolyticus (strain ATCC 43068 / DSM 8971 / 11B) protein is Transaldolase.